The chain runs to 199 residues: Protein GrpE (199 aa).

Belongs to the GrpE family. As to quaternary structure, homodimer.

It localises to the cytoplasm. Participates actively in the response to hyperosmotic and heat shock by preventing the aggregation of stress-denatured proteins, in association with DnaK and GrpE. It is the nucleotide exchange factor for DnaK and may function as a thermosensor. Unfolded proteins bind initially to DnaJ; upon interaction with the DnaJ-bound protein, DnaK hydrolyzes its bound ATP, resulting in the formation of a stable complex. GrpE releases ADP from DnaK; ATP binding to DnaK triggers the release of the substrate protein, thus completing the reaction cycle. Several rounds of ATP-dependent interactions between DnaJ, DnaK and GrpE are required for fully efficient folding. The chain is Protein GrpE from Fusobacterium nucleatum subsp. nucleatum (strain ATCC 25586 / DSM 15643 / BCRC 10681 / CIP 101130 / JCM 8532 / KCTC 2640 / LMG 13131 / VPI 4355).